A 301-amino-acid polypeptide reads, in one-letter code: GTP cyclohydrolase FolE2 (301 aa).

It belongs to the GTP cyclohydrolase IV family.

It carries out the reaction GTP + H2O = 7,8-dihydroneopterin 3'-triphosphate + formate + H(+). It participates in cofactor biosynthesis; 7,8-dihydroneopterin triphosphate biosynthesis; 7,8-dihydroneopterin triphosphate from GTP: step 1/1. Functionally, converts GTP to 7,8-dihydroneopterin triphosphate. The chain is GTP cyclohydrolase FolE2 from Pseudomonas syringae pv. syringae (strain B728a).